A 515-amino-acid chain; its full sequence is ATP-dependent rRNA helicase rrp-3 (515 aa).

A disordered region spans residues 1–85 (MSTKRRKTSD…LDVAPEQEEV (85 aa)). Low complexity predominate over residues 15–24 (LKKAAAPSAP). Positions 25–55 (ELKKEKKVKDKSTKDKSSTKKTEKTEKKQDA) are enriched in basic and acidic residues. Acidic residues predominate over residues 69–85 (TEEDSVTLDVAPEQEEV). The Q motif motif lies at 90 to 118 (KTFKDLGIVDALCEACERLGYKNPTPIQE). Positions 121-292 (IPLALQNRDI…RASLRDPLKV (172 aa)) constitute a Helicase ATP-binding domain. Residue 134-141 (AETGSGKT) participates in ATP binding. The DEAD box signature appears at 240–243 (DEAD). Residues 316–464 (HKDTYLVYLC…EYPLEKDEVM (149 aa)) form the Helicase C-terminal domain. Residues 482–515 (KSLMENQGKHGGLLKRKRGNGQGGGRDHMDAEEG) form a disordered region. Residues 506–515 (GRDHMDAEEG) are compositionally biased toward basic and acidic residues.

This sequence belongs to the DEAD box helicase family. DDX47/RRP3 subfamily.

Its subcellular location is the nucleus. Required for pre-ribosomal RNA processing. Involved in the maturation of the 35S-pre-rRNA and to its cleavage to mature 18S rRNA. This chain is ATP-dependent rRNA helicase rrp-3 (rrp-3), found in Neurospora crassa (strain ATCC 24698 / 74-OR23-1A / CBS 708.71 / DSM 1257 / FGSC 987).